The chain runs to 175 residues: NADH-quinone oxidoreductase subunit B (175 aa).

The [4Fe-4S] cluster site is built by Cys-49, Cys-50, Cys-115, and Cys-145.

Belongs to the complex I 20 kDa subunit family. As to quaternary structure, NDH-1 is composed of 14 different subunits. Subunits NuoB, C, D, E, F, and G constitute the peripheral sector of the complex. The cofactor is [4Fe-4S] cluster.

It localises to the cell membrane. It carries out the reaction a quinone + NADH + 5 H(+)(in) = a quinol + NAD(+) + 4 H(+)(out). NDH-1 shuttles electrons from NADH, via FMN and iron-sulfur (Fe-S) centers, to quinones in the respiratory chain. The immediate electron acceptor for the enzyme in this species is believed to be a menaquinone. Couples the redox reaction to proton translocation (for every two electrons transferred, four hydrogen ions are translocated across the cytoplasmic membrane), and thus conserves the redox energy in a proton gradient. The sequence is that of NADH-quinone oxidoreductase subunit B from Heliobacterium modesticaldum (strain ATCC 51547 / Ice1).